Reading from the N-terminus, the 767-residue chain is 5-methyltetrahydropteroyltriglutamate--homocysteine methyltransferase (767 aa).

5-methyltetrahydropteroyltri-L-glutamate contacts are provided by residues 17 to 20 (RELK) and Lys117. L-homocysteine-binding positions include 441-443 (IGS) and Glu494. L-methionine contacts are provided by residues 441–443 (IGS) and Glu494. Residues 525–526 (RC) and Trp571 contribute to the 5-methyltetrahydropteroyltri-L-glutamate site. Asp609 contributes to the L-homocysteine binding site. Asp609 contacts L-methionine. 5-methyltetrahydropteroyltri-L-glutamate is bound at residue Glu615. Zn(2+) contacts are provided by His652, Cys654, and Glu676. The Proton donor role is filled by His705. Cys737 serves as a coordination point for Zn(2+).

It belongs to the vitamin-B12 independent methionine synthase family. Requires Zn(2+) as cofactor.

The enzyme catalyses 5-methyltetrahydropteroyltri-L-glutamate + L-homocysteine = tetrahydropteroyltri-L-glutamate + L-methionine. It functions in the pathway amino-acid biosynthesis; L-methionine biosynthesis via de novo pathway; L-methionine from L-homocysteine (MetE route): step 1/1. Functionally, catalyzes the transfer of a methyl group from 5-methyltetrahydrofolate to homocysteine resulting in methionine formation. The protein is 5-methyltetrahydropteroyltriglutamate--homocysteine methyltransferase of Bifidobacterium longum subsp. infantis (strain ATCC 15697 / DSM 20088 / JCM 1222 / NCTC 11817 / S12).